The following is a 98-amino-acid chain: Co-chaperonin GroES (98 aa).

It belongs to the GroES chaperonin family. As to quaternary structure, heptamer of 7 subunits arranged in a ring. Interacts with the chaperonin GroEL.

The protein localises to the cytoplasm. Together with the chaperonin GroEL, plays an essential role in assisting protein folding. The GroEL-GroES system forms a nano-cage that allows encapsulation of the non-native substrate proteins and provides a physical environment optimized to promote and accelerate protein folding. GroES binds to the apical surface of the GroEL ring, thereby capping the opening of the GroEL channel. The polypeptide is Co-chaperonin GroES (Bartonella bacilliformis (strain ATCC 35685 / KC583 / Herrer 020/F12,63)).